The sequence spans 396 residues: L-lactate dehydrogenase (396 aa).

The region spanning 1 to 380 (MIISAASDYR…SGDSLVQELG (380 aa)) is the FMN hydroxy acid dehydrogenase domain. Residue tyrosine 24 participates in substrate binding. Residues serine 106 and glutamine 127 each contribute to the FMN site. Tyrosine 129 contacts substrate. FMN is bound at residue threonine 155. Arginine 164 contacts substrate. Lysine 251 contributes to the FMN binding site. Histidine 275 functions as the Proton acceptor in the catalytic mechanism. Arginine 278 is a binding site for substrate. 306–330 (DSGIRNGLDVVRMIALGADTVLLGR) contacts FMN.

This sequence belongs to the FMN-dependent alpha-hydroxy acid dehydrogenase family. FMN is required as a cofactor.

The protein resides in the cell inner membrane. It catalyses the reaction (S)-lactate + A = pyruvate + AH2. In terms of biological role, catalyzes the conversion of L-lactate to pyruvate. Is coupled to the respiratory chain. This is L-lactate dehydrogenase from Salmonella paratyphi C (strain RKS4594).